Consider the following 498-residue polypeptide: Aspartyl aminopeptidase (498 aa).

A Zn(2+)-binding site is contributed by His-91. His-166 is a binding site for substrate. Zn(2+) is bound at residue Asp-274. Glu-311 contributes to the substrate binding site. Residues Glu-312 and Asp-363 each coordinate Zn(2+). Residues Asp-363, His-366, Lys-391, and Tyr-398 each contribute to the substrate site. His-463 is a binding site for Zn(2+).

Belongs to the peptidase M18 family. As to quaternary structure, tetrahedron-shaped homododecamer built from six homodimers. Zn(2+) serves as cofactor. In terms of processing, the N-terminus is blocked.

The catalysed reaction is Release of an N-terminal aspartate or glutamate from a peptide, with a preference for aspartate.. Its activity is regulated as follows. Inhibited by zinc. Stimulated by calcium and bacitracin. In Aspergillus oryzae (strain ATCC 42149 / RIB 40) (Yellow koji mold), this protein is Aspartyl aminopeptidase (dapA).